The following is a 234-amino-acid chain: Probable ascorbate-specific transmembrane electron transporter 1 (234 aa).

Over 1 to 9 the chain is Cytoplasmic; sequence MGLGVRAAP. The helical transmembrane segment at 10–30 threads the bilayer; sequence FTYVAHALAVAAATMVLVWCI. Positions 13-217 constitute a Cytochrome b561 domain; it reads VAHALAVAAA…FGASVVVAAV (205 aa). The Extracellular portion of the chain corresponds to 31–48; the sequence is HFRGGLAFEATNKNLIFN. The helical transmembrane segment at 49 to 69 threads the bilayer; sequence VHPVLMLIGYIILGSEAIMVY. H50 is a binding site for heme b. Residue 65–73 participates in L-ascorbate binding; that stretch reads AIMVYKVLP. Residues 70–82 are Cytoplasmic-facing; it reads KVLPTWKHDTTKL. A helical membrane pass occupies residues 83–103; the sequence is IHLILHAIALVFGAVGIYCAF. The heme b site is built by H84 and H118. Residues 104 to 121 are Extracellular-facing; it reads KFHNESGIANLYSLHSWL. 114-123 contacts monodehydro-L-ascorbate radical; that stretch reads LYSLHSWLGI. The chain crosses the membrane as a helical span at residues 122–142; the sequence is GIGTICLYGIQWIFGFVAFFF. Over 143-151 the chain is Cytoplasmic; sequence PRASPSVRK. A helical membrane pass occupies residues 152 to 172; sequence GVLPWHILFGLFVYILALATA. H157 provides a ligand contact to heme b. Topologically, residues 173–194 are extracellular; sequence ELGFLEKLTFLQSSGLDKYGAE. Residues 195-215 traverse the membrane as a helical segment; it reads AFLVNFTALIVVLFGASVVVA. Residues 216–234 are Cytoplasmic-facing; it reads AVSPARVEEPHEYAPIPES.

Heme b is required as a cofactor.

Its subcellular location is the membrane. Its function is as follows. Two-heme-containing cytochrome. Catalyzes ascorbate-dependent trans-membrane electron transfer by utilizing a concerted H(+)/e(-) transfer mechanism. This is Probable ascorbate-specific transmembrane electron transporter 1 from Oryza sativa subsp. japonica (Rice).